The primary structure comprises 65 residues: Omega-lycotoxin-Am1f (65 aa).

The propeptide occupies glycine 1–arginine 18. 4 disulfide bridges follow: cysteine 22-cysteine 37, cysteine 29-cysteine 42, cysteine 36-cysteine 62, and cysteine 44-cysteine 60.

It belongs to the neurotoxin omega-lctx family. In terms of tissue distribution, expressed by the venom gland.

It localises to the secreted. Its function is as follows. Modulates Cav2.1/CACNA1A voltage-gated calcium channels (P/Q-type currents) in rat cerebellar Purkinje cells and hippocampal CA1-CA3 neurons. At saturating concentrations (&gt;10 nM) decelerates activation kinetics and slightly increases peak amplitude without affecting deactivation kinetics. In vivo, does not cause death when intravenously injected into mice. In rat models, through its activity on Cav2.1/CACNA1A, has an ameliorative effect on memory defects provoked by hyperstimulation of N-methyl-D-aspartate receptors (NMDARs) in the hippocampus. This chain is Omega-lycotoxin-Am1f, found in Alopecosa marikovskyi (Wolf spider).